The chain runs to 55 residues: Trypsin inhibitor (55 aa).

The Kazal-like domain maps to 1-55; that stretch reads AHMDCTEFNPLCRCNKMLGDLICAVIGDAKEEHRNMCALCCEHPGGFEYSNGPCE. 4 disulfide bridges follow: Cys5–Cys40, Cys12–Cys41, Cys14–Cys37, and Cys23–Cys54.

Its subcellular location is the secreted. Potent inhibitor of trypsin. This chain is Trypsin inhibitor, found in Halocynthia roretzi (Sea squirt).